Here is a 653-residue protein sequence, read N- to C-terminus: Chaperone protein dnaK3 (653 aa).

T197 carries the phosphothreonine; by autocatalysis modification.

This sequence belongs to the heat shock protein 70 family.

In terms of biological role, acts as a chaperone. In Nostoc sp. (strain PCC 7120 / SAG 25.82 / UTEX 2576), this protein is Chaperone protein dnaK3 (dnaK3).